We begin with the raw amino-acid sequence, 433 residues long: Zinc finger and SCAN domain-containing protein 4 (433 aa).

The SCAN box domain occupies 44-126; sequence RMVLNSFQDS…RFMEDLTDDS (83 aa). Polar residues-rich tracts occupy residues 162–184 and 277–298; these read SAQT…TSLE and QPEQ…NSTC. Disordered stretches follow at residues 162-199 and 272-298; these read SAQT…CNSS and AGCI…NSTC. 4 C2H2-type zinc fingers span residues 312–334, 340–362, 368–390, and 396–418; these read YKCE…QRRH, FVCP…QIIH, FTCS…ERIH, and YTCP…MRTH. The segment at 414–433 is disordered; it reads HMRTHEKITPPSVPSTPEAS.

Its subcellular location is the nucleus. The protein resides in the chromosome. It localises to the telomere. In terms of biological role, embryonic stem (ES) cell-specific transcription factor required to regulate ES cell pluripotency. Binds telomeres and plays a key role in genomic stability in ES cells by regulating telomere elongation. Acts as an activator of spontaneous telomere sister chromatid exchange (T-SCE) and telomere elongation in undifferentiated ES cells. The chain is Zinc finger and SCAN domain-containing protein 4 (ZSCAN4) from Pongo pygmaeus (Bornean orangutan).